The sequence spans 563 residues: Proline--tRNA ligase (563 aa).

This sequence belongs to the class-II aminoacyl-tRNA synthetase family. ProS type 1 subfamily. As to quaternary structure, homodimer.

It is found in the cytoplasm. The enzyme catalyses tRNA(Pro) + L-proline + ATP = L-prolyl-tRNA(Pro) + AMP + diphosphate. Its function is as follows. Catalyzes the attachment of proline to tRNA(Pro) in a two-step reaction: proline is first activated by ATP to form Pro-AMP and then transferred to the acceptor end of tRNA(Pro). As ProRS can inadvertently accommodate and process non-cognate amino acids such as alanine and cysteine, to avoid such errors it has two additional distinct editing activities against alanine. One activity is designated as 'pretransfer' editing and involves the tRNA(Pro)-independent hydrolysis of activated Ala-AMP. The other activity is designated 'posttransfer' editing and involves deacylation of mischarged Ala-tRNA(Pro). The misacylated Cys-tRNA(Pro) is not edited by ProRS. This chain is Proline--tRNA ligase, found in Persephonella marina (strain DSM 14350 / EX-H1).